A 365-amino-acid polypeptide reads, in one-letter code: Probable dual-specificity RNA methyltransferase RlmN (365 aa).

E108 functions as the Proton acceptor in the catalytic mechanism. In terms of domain architecture, Radical SAM core spans 114–347 (HNYGNSVCVT…VTIRREHGHD (234 aa)). A disulfide bridge links C121 with C352. [4Fe-4S] cluster is bound by residues C128, C132, and C135. S-adenosyl-L-methionine contacts are provided by residues 178–179 (GE), S210, 233–235 (SLH), and N309. C352 serves as the catalytic S-methylcysteine intermediate.

Belongs to the radical SAM superfamily. RlmN family. [4Fe-4S] cluster is required as a cofactor.

The protein resides in the cytoplasm. It catalyses the reaction adenosine(2503) in 23S rRNA + 2 reduced [2Fe-2S]-[ferredoxin] + 2 S-adenosyl-L-methionine = 2-methyladenosine(2503) in 23S rRNA + 5'-deoxyadenosine + L-methionine + 2 oxidized [2Fe-2S]-[ferredoxin] + S-adenosyl-L-homocysteine. The enzyme catalyses adenosine(37) in tRNA + 2 reduced [2Fe-2S]-[ferredoxin] + 2 S-adenosyl-L-methionine = 2-methyladenosine(37) in tRNA + 5'-deoxyadenosine + L-methionine + 2 oxidized [2Fe-2S]-[ferredoxin] + S-adenosyl-L-homocysteine. Specifically methylates position 2 of adenine 2503 in 23S rRNA and position 2 of adenine 37 in tRNAs. The protein is Probable dual-specificity RNA methyltransferase RlmN of Geobacillus kaustophilus (strain HTA426).